Consider the following 316-residue polypeptide: Protoheme IX farnesyltransferase (316 aa).

8 consecutive transmembrane segments (helical) span residues 35–55 (VMVL…GHVQ), 56–76 (PAIG…SGCL), 119–139 (VVLG…TIVF), 156–176 (IVIG…VVTG), 183–203 (LILF…LALI), 229–246 (IVWY…PVAL), 250–272 (GLVY…IRVL), and 283–303 (AAMG…SALL).

The protein belongs to the UbiA prenyltransferase family. Protoheme IX farnesyltransferase subfamily.

It localises to the cell inner membrane. The enzyme catalyses heme b + (2E,6E)-farnesyl diphosphate + H2O = Fe(II)-heme o + diphosphate. The protein operates within porphyrin-containing compound metabolism; heme O biosynthesis; heme O from protoheme: step 1/1. Converts heme B (protoheme IX) to heme O by substitution of the vinyl group on carbon 2 of heme B porphyrin ring with a hydroxyethyl farnesyl side group. The sequence is that of Protoheme IX farnesyltransferase from Methylobacterium radiotolerans (strain ATCC 27329 / DSM 1819 / JCM 2831 / NBRC 15690 / NCIMB 10815 / 0-1).